Reading from the N-terminus, the 1790-residue chain is Cytokinesis protein sepA (1790 aa).

Disordered stretches follow at residues 1–275 and 328–350; these read MPTS…YLTR and GEQK…GILE. The segment covering 24 to 35 has biased composition (basic and acidic residues); sequence ERPVEDRWDAHG. 2 stretches are compositionally biased toward low complexity: residues 39 to 62 and 187 to 203; these read SLAP…SIQS and SHHS…SRMS. Residues 205 to 236 are compositionally biased toward polar residues; it reads DQASIHSSLSSNTRGSSYISTDGSSRTTLPSH. The GBD/FH3 domain occupies 274 to 702; sequence TRPRDDRVVD…YVAMDRRLPD (429 aa). A compositionally biased stretch (basic and acidic residues) spans 328–341; the sequence is GEQKRKQKARETHG. A coiled-coil region spans residues 724-811; it reads AEARRAYDES…QRNELETREL (88 aa). The 182-residue stretch at 955-1136 folds into the FH1 domain; sequence DPEQATGLLG…NYLASQGAPS (182 aa). Residues 975-986 are compositionally biased toward basic and acidic residues; it reads ADDAKDEGKPTE. Disordered regions lie at residues 975–1119, 1465–1484, and 1596–1790; these read ADDA…PPGT, NLSD…ITQR, and RAAA…PSTS. Pro residues-rich tracts occupy residues 1015–1026 and 1033–1118; these read APPPPPPPPPAH and APPP…PPPG. An FH2 domain is found at 1141–1564; it reads VMSSIRPKKK…TEASLARKRI (424 aa). The stretch at 1435–1566 forms a coiled coil; that stretch reads LQKLNVDQLR…ASLARKRINV (132 aa). One can recognise a DAD domain in the interval 1581 to 1613; the sequence is SPATSGAMDSLLEKLRAAAPQAKDQRDRRRRAR. The span at 1608–1620 shows a compositional bias: basic residues; sequence RRRRARLKERHQV. Residues 1644–1661 show a composition bias toward polar residues; sequence SGATDTNATDSSLLSPTI. Positions 1694 to 1710 are enriched in basic and acidic residues; that stretch reads PDPERTRRRRESAEEER. Residues 1720-1746 are compositionally biased toward polar residues; the sequence is GATSGSKDSNDTTPLSPVTEPTSTQGE.

This sequence belongs to the formin homology family. BNI1 subfamily.

In terms of biological role, involved in cytokinesis. Overexpression results in growth inhibition. The protein is Cytokinesis protein sepA (sepA) of Emericella nidulans (strain FGSC A4 / ATCC 38163 / CBS 112.46 / NRRL 194 / M139) (Aspergillus nidulans).